The chain runs to 398 residues: Protein RecA (398 aa).

83 to 90 (GPESSGKT) lines the ATP pocket. The tract at residues 351–398 (AGQKNDKKSKLEEKANAGAGISEASEPDSSAEEDFEEFAPIDIGSLGE) is disordered. Basic and acidic residues predominate over residues 354–365 (KNDKKSKLEEKA). Acidic residues predominate over residues 375–389 (SEPDSSAEEDFEEFA).

The protein belongs to the RecA family.

It localises to the cytoplasm. Functionally, can catalyze the hydrolysis of ATP in the presence of single-stranded DNA, the ATP-dependent uptake of single-stranded DNA by duplex DNA, and the ATP-dependent hybridization of homologous single-stranded DNAs. It interacts with LexA causing its activation and leading to its autocatalytic cleavage. This Ruminococcus albus (strain ATCC 27210 / DSM 20455 / JCM 14654 / NCDO 2250 / 7) protein is Protein RecA.